Consider the following 284-residue polypeptide: MNEATKRTIVKEIDAILYEEHKVLDHGFIRVVDYMGSDSAIVQAARVSYGKGTKQISQDEALIKYLMRHHHTTPFEMCEIKFHVKLPIFVARQWIRHRTANVNEYSARYSILDNEFYTPKPEQVAKQSDNNKQGSGEAFDPDTSKEIIDSLINDSNLVYSHYEKFIEQGLAREIARTNLMLNYYTQFYWKIDLHNLLHFLKLRADKHAQYEIRVYAEVMLDIIKKWVPLAYNAFVEYCLESACISRTGLEIIRKLIKGENVTREESNIGKREWGELMSILDKQS.

One can recognise a ThyX domain in the interval 27–237 (GFIRVVDYMG…PLAYNAFVEY (211 aa)). FAD is bound by residues Thr-73, 96–98 (RHR), and Glu-104. DUMP contacts are provided by residues 93–96 (QWIR) and 104–108 (EYSAR). A ThyX motif motif is present at residues 96–106 (RHRTANVNEYS). Residues 122–142 (EQVAKQSDNNKQGSGEAFDPD) form a disordered region. A compositionally biased stretch (polar residues) spans 125–134 (AKQSDNNKQG). Arg-176 is a dUMP binding site. Residues 192–194 (DLH) and His-198 each bind FAD. Arg-203 is a binding site for dUMP. Catalysis depends on Arg-203, which acts as the Involved in ionization of N3 of dUMP, leading to its activation.

The protein belongs to the thymidylate synthase ThyX family. In terms of assembly, homotetramer. Requires FAD as cofactor.

It catalyses the reaction dUMP + (6R)-5,10-methylene-5,6,7,8-tetrahydrofolate + NADPH + H(+) = dTMP + (6S)-5,6,7,8-tetrahydrofolate + NADP(+). It functions in the pathway pyrimidine metabolism; dTTP biosynthesis. Functionally, catalyzes the reductive methylation of 2'-deoxyuridine-5'-monophosphate (dUMP) to 2'-deoxythymidine-5'-monophosphate (dTMP) while utilizing 5,10-methylenetetrahydrofolate (mTHF) as the methyl donor, and NADPH and FADH(2) as the reductant. The sequence is that of Flavin-dependent thymidylate synthase from Wolbachia pipientis wMel.